The following is a 195-amino-acid chain: Imidazoleglycerol-phosphate dehydratase (195 aa).

The protein belongs to the imidazoleglycerol-phosphate dehydratase family.

The protein resides in the cytoplasm. It carries out the reaction D-erythro-1-(imidazol-4-yl)glycerol 3-phosphate = 3-(imidazol-4-yl)-2-oxopropyl phosphate + H2O. Its pathway is amino-acid biosynthesis; L-histidine biosynthesis; L-histidine from 5-phospho-alpha-D-ribose 1-diphosphate: step 6/9. This chain is Imidazoleglycerol-phosphate dehydratase, found in Exiguobacterium sp. (strain ATCC BAA-1283 / AT1b).